The following is a 3411-amino-acid chain: Genome polyprotein (3411 aa).

Over 1–104 the chain is Cytoplasmic; sequence MSGRKAQGKT…LSSRKRRSHD (104 aa). Residues 38–72 form a hydrophobic; homodimerization of capsid protein C region; it reads PGPSRGVQGFISFFSFNILTGKKITAHLKRLWKML. Residues 102-121 constitute a propeptide, ER anchor for the capsid protein C, removed in mature form by serine protease NS3; that stretch reads SHDVLTVQFLILGMLLMAGG. Residues 105–125 traverse the membrane as a helical segment; that stretch reads VLTVQFLILGMLLMAGGVTLV. Residues 126-244 lie on the Extracellular side of the membrane; sequence RKNRWLLLNV…GERQLQKIER (119 aa). Residues Asn-134 and Asn-150 are each glycosylated (N-linked (GlcNAc...) asparagine; by host). A helical transmembrane segment spans residues 245-265; the sequence is WLVRNPFFAVTALAIAYLVGS. Over 266–270 the chain is Cytoplasmic; sequence NMTQR. Residues 271-285 form a helical membrane-spanning segment; sequence VVIALLVLAVGPAYS. Topologically, residues 286–730 are extracellular; that stretch reads AHCIGITDRD…TVFGSAFQGL (445 aa). Disulfide bonds link Cys-288–Cys-315, Cys-345–Cys-401, Cys-345–Cys-406, Cys-359–Cys-390, Cys-377–Cys-401, Cys-377–Cys-406, Cys-467–Cys-568, and Cys-585–Cys-615. The fusion peptide stretch occupies residues 383–396; sequence DRGWGNGCGLFGKG. Residues 731-751 form a helical membrane-spanning segment; the sequence is FGGLSWITKVIMGAVLIWVGI. Topologically, residues 752 to 757 are extracellular; that stretch reads NTRNMT. Residues 758–778 form a helical membrane-spanning segment; that stretch reads MSMSMILVGVIMMFLSLGVGA. Residues 779–1132 are Extracellular-facing; that stretch reads DQGCAINFGK…LVRSWVTAGE (354 aa). Intrachain disulfides connect Cys-782/Cys-793, Cys-833/Cys-921, Cys-957/Cys-1002, Cys-1058/Cys-1107, Cys-1069/Cys-1091, and Cys-1090/Cys-1094. Residues Asn-908 and Asn-986 are each glycosylated (N-linked (GlcNAc...) asparagine; by host). The helical transmembrane segment at 1133–1153 threads the bilayer; the sequence is IHAVPFGLVSMMIAMEVVLRK. Residues 1154-1201 are Cytoplasmic-facing; that stretch reads RQGPKQMLVGGMVLLGAMLVGQVTLLDLLKLTMAVGLHFHEMNNGGDA. A helical membrane pass occupies residues 1202 to 1222; that stretch reads MYMALIAAFSIRPGLLIGFGL. Over 1223–1287 the chain is Lumenal; that stretch reads RTLWSPRERL…ILPLMALLTP (65 aa). Residues 1288–1308 traverse the membrane as a helical segment; the sequence is VTMAEVRLATMLLCAVVIIGV. The Cytoplasmic segment spans residues 1309–1355; it reads LHQNSKDTSMQKTIPLVALTLTSYLGLTQPFLGLCAFLATRIFGRRS. A helical transmembrane segment spans residues 1356–1376; sequence IPVNEALAAAGLVGVLAGLAF. At 1377-1378 the chain is on the lumenal side; that stretch reads QE. The chain crosses the membrane as a helical span at residues 1379–1399; the sequence is MENFLGPIAVGGILMMLVSVA. Residues 1400–1456 lie on the Cytoplasmic side of the membrane; that stretch reads GRVDGLELKKLGEVSWEEEAEISGSSARYDVALSEQGEFKLLSEEKVPWDQVVMTSL. The interacts with and activates NS3 protease stretch occupies residues 1407–1446; that stretch reads LKKLGEVSWEEEAEISGSSARYDVALSEQGEFKLLSEEKV. The segment at residues 1457 to 1477 is an intramembrane region (helical); that stretch reads ALVGAAIHPSALLLVLAGWLF. The Cytoplasmic segment spans residues 1478–2157; it reads HVKGARRSGD…RNALSMMPEA (680 aa). Positions 1485-1665 constitute a Peptidase S7 domain; it reads SGDVLWDIPT…EVKEEGKEEL (181 aa). Residues His-1537, Asp-1561, and Ser-1622 each act as charge relay system; for serine protease NS3 activity in the active site. The region spanning 1669 to 1825 is the Helicase ATP-binding domain; the sequence is PTMLKKGMTT…HSNGEIEDVQ (157 aa). Residues 1673–1676 are important for RNA-binding; sequence KKGM. ATP is bound at residue 1682 to 1689; it reads YHPGAGKT. A DEAH box motif is present at residues 1773 to 1776; the sequence is DEAH. Residues 1820-1997 form the Helicase C-terminal domain; sequence EIEDVQTDIP…VRGGMVAPLY (178 aa). Position 1877 is an N6-acetyllysine; by host (Lys-1877). A helical membrane pass occupies residues 2158–2178; that stretch reads MTIVMLFILAGLLTSGMVIFF. At 2179-2186 the chain is on the lumenal side; sequence MSPKGISR. An intramembrane region (helical) is located at residues 2187–2207; the sequence is MSMAMGTMAGCGYLMFLGGAK. The Lumenal portion of the chain corresponds to 2208–2209; sequence PT. Residues 2210-2230 form a helical membrane-spanning segment; sequence HISYIMLIFFVLMVVVIPEPG. At 2231–2241 the chain is on the cytoplasmic side; sequence QQRSIQDNQVA. Residues 2242–2262 form a helical membrane-spanning segment; the sequence is YLIIGILTLVSVVAANELGML. Over 2263-2293 the chain is Lumenal; the sequence is ERTKEDLFGKKNLIPSSASPWSWPDLDLKPG. An intramembrane region (helical) is located at residues 2294 to 2314; that stretch reads AAWTVYVGIVTILSPMLHHWI. Residues 2315 to 2360 are Lumenal-facing; that stretch reads KVEYGNLSLSGIAQSASVLSFMDKGIPFMKMNISVIILLVSGWNSI. A helical transmembrane segment spans residues 2361–2380; it reads TVMPLLCGIGCAMLHWTLIL. Topologically, residues 2381–2421 are cytoplasmic; sequence PGIKAQQSKLPQRRVFHGVAKNPVVDGNPTVDIEEAPEMPA. The chain crosses the membrane as a helical span at residues 2422–2442; the sequence is LYEKKLALYLLLALSLASVAM. The Lumenal portion of the chain corresponds to 2443–2445; that stretch reads CRT. The helical transmembrane segment at 2446 to 2466 threads the bilayer; sequence PFSLAEGIVLASAALGPLIEG. The Cytoplasmic portion of the chain corresponds to 2467–3411; that stretch reads NTSLLWNGPM…DADLQPGELI (945 aa). An mRNA cap 0-1 NS5-type MT domain is found at 2507–2771; sequence GRANGKTLGE…DVILPIGTRS (265 aa). Ser-2562 serves as a coordination point for S-adenosyl-L-methionine. The residue at position 2562 (Ser-2562) is a Phosphoserine. Lys-2567 functions as the For 2'-O-MTase activity in the catalytic mechanism. Gly-2592, Trp-2593, Thr-2610, Leu-2611, Asp-2637, and Ile-2638 together coordinate S-adenosyl-L-methionine. The active-site For 2'-O-MTase activity is Asp-2652. Ile-2653 lines the S-adenosyl-L-methionine pocket. Active-site for 2'-O-MTase activity residues include Lys-2688 and Glu-2724. Residue Tyr-2726 coordinates S-adenosyl-L-methionine. The Nuclear localization signal motif lies at 2878 to 2911; sequence RKIMKVVNRWLFRHLAREKNPRLCTKEEFIAKVR. Positions 2945, 2949, 2954, and 2957 each coordinate Zn(2+). In terms of domain architecture, RdRp catalytic spans 3035-3187; the sequence is GGFYADDTAG…RPIDDRFGMA (153 aa). Zn(2+) is bound by residues His-3222, Cys-3238, and Cys-3357.

In the N-terminal section; belongs to the class I-like SAM-binding methyltransferase superfamily. mRNA cap 0-1 NS5-type methyltransferase family. As to quaternary structure, homodimer. Interacts (via N-terminus) with host EXOC1 (via C-terminus); this interaction results in EXOC1 degradation through the proteasome degradation pathway. Forms heterodimers with envelope protein E in the endoplasmic reticulum and Golgi. In terms of assembly, homodimer; in the endoplasmic reticulum and Golgi. Interacts with protein prM. Interacts with non-structural protein 1. As to quaternary structure, homodimer; Homohexamer when secreted. Interacts with envelope protein E. Interacts (via N-terminus) with serine protease NS3. In terms of assembly, forms a heterodimer with serine protease NS3. May form homooligomers. As to quaternary structure, forms a heterodimer with NS2B. Interacts with non-structural protein 2A (via N-terminus). Interacts with NS4B. Interacts with unphosphorylated RNA-directed RNA polymerase NS5; this interaction stimulates RNA-directed RNA polymerase NS5 guanylyltransferase activity. NS3 interacts with host PDCD6IP; this interaction contributes to virion release. Interacts with serine protease NS3. In terms of assembly, homodimer. Interacts with host STAT2; this interaction prevents the establishment of cellular antiviral state. Interacts with serine protease NS3. Interacts with host TRIM23; this interaction leads to NS5 ubiquitination. Specific enzymatic cleavages in vivo yield mature proteins. The nascent capsid protein C contains a C-terminal hydrophobic domain that act as a signal sequence for translocation of prM into the lumen of the ER. Mature capsid protein C is cleaved at a site upstream of this hydrophobic domain by NS3. prM is cleaved in post-Golgi vesicles by a host furin, releasing the mature small envelope protein M, and peptide pr. Non-structural protein 2A-alpha, a C-terminally truncated form of non-structural protein 2A, results from partial cleavage by NS3. Specific enzymatic cleavages in vivo yield mature proteins peptide 2K acts as a signal sequence and is removed from the N-terminus of NS4B by the host signal peptidase in the ER lumen. Signal cleavage at the 2K-4B site requires a prior NS3 protease-mediated cleavage at the 4A-2K site. Post-translationally, cleaved in post-Golgi vesicles by a host furin, releasing the mature small envelope protein M, and peptide pr. This cleavage is incomplete as up to 30% of viral particles still carry uncleaved prM. In terms of processing, N-glycosylated. N-glycosylated. The excreted form is glycosylated and this is required for efficient secretion of the protein from infected cells. Post-translationally, polyubiquitinated; ubiquitination is probably mediated by host TRIM23 and is prerequisite for NS5-STAT2 interaction. NS5 is not ISGylated or sumoylated. In terms of processing, acetylated by host KAT5. Acetylation modulates NS3 RNA-binding and unwinding activities and plays an important positive role for viral replication. Phosphorylated on serines residues. This phosphorylation may trigger NS5 nuclear localization.

It is found in the virion. The protein resides in the host nucleus. Its subcellular location is the host cytoplasm. It localises to the host perinuclear region. The protein localises to the secreted. It is found in the virion membrane. The protein resides in the host endoplasmic reticulum membrane. It catalyses the reaction Selective hydrolysis of -Xaa-Xaa-|-Yaa- bonds in which each of the Xaa can be either Arg or Lys and Yaa can be either Ser or Ala.. It carries out the reaction RNA(n) + a ribonucleoside 5'-triphosphate = RNA(n+1) + diphosphate. The catalysed reaction is a ribonucleoside 5'-triphosphate + H2O = a ribonucleoside 5'-diphosphate + phosphate + H(+). The enzyme catalyses ATP + H2O = ADP + phosphate + H(+). It catalyses the reaction a 5'-end (5'-triphosphoguanosine)-ribonucleoside in mRNA + S-adenosyl-L-methionine = a 5'-end (N(7)-methyl 5'-triphosphoguanosine)-ribonucleoside in mRNA + S-adenosyl-L-homocysteine. It carries out the reaction a 5'-end (N(7)-methyl 5'-triphosphoguanosine)-ribonucleoside in mRNA + S-adenosyl-L-methionine = a 5'-end (N(7)-methyl 5'-triphosphoguanosine)-(2'-O-methyl-ribonucleoside) in mRNA + S-adenosyl-L-homocysteine + H(+). Its function is as follows. Plays a role in virus budding by binding to the cell membrane and gathering the viral RNA into a nucleocapsid that forms the core of a mature virus particle. During virus entry, may induce genome penetration into the host cytoplasm after hemifusion induced by the surface proteins. Can migrate to the cell nucleus where it modulates host functions. Functionally, inhibits RNA silencing by interfering with host Dicer. In terms of biological role, prevents premature fusion activity of envelope proteins in trans-Golgi by binding to envelope protein E at pH6.0. After virion release in extracellular space, gets dissociated from E dimers. Acts as a chaperone for envelope protein E during intracellular virion assembly by masking and inactivating envelope protein E fusion peptide. prM is the only viral peptide matured by host furin in the trans-Golgi network probably to avoid catastrophic activation of the viral fusion activity in acidic Golgi compartment prior to virion release. prM-E cleavage is inefficient, and many virions are only partially matured. These uncleaved prM would play a role in immune evasion. Its function is as follows. May play a role in virus budding. Exerts cytotoxic effects by activating a mitochondrial apoptotic pathway through M ectodomain. May display a viroporin activity. Functionally, binds to host cell surface receptor and mediates fusion between viral and cellular membranes. Envelope protein is synthesized in the endoplasmic reticulum in the form of heterodimer with protein prM. They play a role in virion budding in the ER, and the newly formed immature particle is covered with 60 spikes composed of heterodimer between precursor prM and envelope protein E. The virion is transported to the Golgi apparatus where the low pH causes dissociation of PrM-E heterodimers and formation of E homodimers. prM-E cleavage is inefficient, and many virions are only partially matured. These uncleaved prM would play a role in immune evasion. In terms of biological role, involved in immune evasion, pathogenesis and viral replication. Once cleaved off the polyprotein, is targeted to three destinations: the viral replication cycle, the plasma membrane and the extracellular compartment. Essential for viral replication. Required for formation of the replication complex and recruitment of other non-structural proteins to the ER-derived membrane structures. Excreted as a hexameric lipoparticle that plays a role against host immune response. Antagonizing the complement function. Binds to the host macrophages and dendritic cells. Inhibits signal transduction originating from Toll-like receptor 3 (TLR3). Component of the viral RNA replication complex that functions in virion assembly and antagonizes the host immune response. Its function is as follows. Required cofactor for the serine protease function of NS3. May have membrane-destabilizing activity and form viroporins. Functionally, displays three enzymatic activities: serine protease, NTPase and RNA helicase. NS3 serine protease, in association with NS2B, performs its autocleavage and cleaves the polyprotein at dibasic sites in the cytoplasm: C-prM, NS2A-NS2B, NS2B-NS3, NS3-NS4A, NS4A-2K and NS4B-NS5. NS3 RNA helicase binds RNA and unwinds dsRNA in the 3' to 5' direction. Also plays a role in virus assembly. In terms of biological role, regulates the ATPase activity of the NS3 helicase activity. NS4A allows NS3 helicase to conserve energy during unwinding. Functions as a signal peptide for NS4B and is required for the interferon antagonism activity of the latter. Its function is as follows. Induces the formation of ER-derived membrane vesicles where the viral replication takes place. Inhibits interferon (IFN)-induced host STAT1 phosphorylation and nuclear translocation, thereby preventing the establishment of cellular antiviral state by blocking the IFN-alpha/beta pathway. Functionally, replicates the viral (+) and (-) RNA genome, and performs the capping of genomes in the cytoplasm. NS5 methylates viral RNA cap at guanine N-7 and ribose 2'-O positions. Besides its role in RNA genome replication, also prevents the establishment of cellular antiviral state by blocking the interferon-alpha/beta (IFN-alpha/beta) signaling pathway. IFN-I induces binding of NS5 to host IFN-activated transcription factor STAT2, preventing its transcriptional activity. Host TRIM23 is the E3 ligase that interacts with and polyubiquitinates NS5 to promote its binding to STAT2 and trigger IFN-I signaling inhibition. The chain is Genome polyprotein from Yellow fever virus (isolate Ivory Coast/85-82H/1982) (YFV).